Here is a 728-residue protein sequence, read N- to C-terminus: Phosphoribosylformylglycinamidine synthase subunit PurL (728 aa).

His54 is a catalytic residue. ATP contacts are provided by Tyr57 and Lys96. Residue Glu98 participates in Mg(2+) binding. Residues 99–102 (SHNH) and Arg121 each bind substrate. The active-site Proton acceptor is His100. Asp122 contacts Mg(2+). Gln245 provides a ligand contact to substrate. Position 273 (Asp273) interacts with Mg(2+). 317 to 319 (ETQ) serves as a coordination point for substrate. ATP contacts are provided by Asp495 and Gly532. Asn533 lines the Mg(2+) pocket. Ser535 is a substrate binding site.

This sequence belongs to the FGAMS family. As to quaternary structure, monomer. Part of the FGAM synthase complex composed of 1 PurL, 1 PurQ and 2 PurS subunits.

It localises to the cytoplasm. It carries out the reaction N(2)-formyl-N(1)-(5-phospho-beta-D-ribosyl)glycinamide + L-glutamine + ATP + H2O = 2-formamido-N(1)-(5-O-phospho-beta-D-ribosyl)acetamidine + L-glutamate + ADP + phosphate + H(+). Its pathway is purine metabolism; IMP biosynthesis via de novo pathway; 5-amino-1-(5-phospho-D-ribosyl)imidazole from N(2)-formyl-N(1)-(5-phospho-D-ribosyl)glycinamide: step 1/2. Functionally, part of the phosphoribosylformylglycinamidine synthase complex involved in the purines biosynthetic pathway. Catalyzes the ATP-dependent conversion of formylglycinamide ribonucleotide (FGAR) and glutamine to yield formylglycinamidine ribonucleotide (FGAM) and glutamate. The FGAM synthase complex is composed of three subunits. PurQ produces an ammonia molecule by converting glutamine to glutamate. PurL transfers the ammonia molecule to FGAR to form FGAM in an ATP-dependent manner. PurS interacts with PurQ and PurL and is thought to assist in the transfer of the ammonia molecule from PurQ to PurL. This is Phosphoribosylformylglycinamidine synthase subunit PurL from Macrococcus caseolyticus (strain JCSC5402) (Macrococcoides caseolyticum).